Here is a 258-residue protein sequence, read N- to C-terminus: tRNA pseudouridine synthase A (258 aa).

The Nucleophile role is filled by Asp-61. Substrate is bound at residue Tyr-119.

The protein belongs to the tRNA pseudouridine synthase TruA family. As to quaternary structure, homodimer.

It catalyses the reaction uridine(38/39/40) in tRNA = pseudouridine(38/39/40) in tRNA. Its function is as follows. Formation of pseudouridine at positions 38, 39 and 40 in the anticodon stem and loop of transfer RNAs. In Chlorobium phaeobacteroides (strain DSM 266 / SMG 266 / 2430), this protein is tRNA pseudouridine synthase A.